Reading from the N-terminus, the 155-residue chain is Ribosome-binding factor A (155 aa).

Basic and acidic residues-rich tracts occupy residues 116–125 (ARQRDQEVAR) and 142–155 (SPHE…ADGW). The interval 116-155 (ARQRDQEVARQAEGATPAGDANPYKTSPHEGRPESEADGW) is disordered.

The protein belongs to the RbfA family. Monomer. Binds 30S ribosomal subunits, but not 50S ribosomal subunits or 70S ribosomes.

Its subcellular location is the cytoplasm. Functionally, one of several proteins that assist in the late maturation steps of the functional core of the 30S ribosomal subunit. Associates with free 30S ribosomal subunits (but not with 30S subunits that are part of 70S ribosomes or polysomes). Required for efficient processing of 16S rRNA. May interact with the 5'-terminal helix region of 16S rRNA. In Corynebacterium kroppenstedtii (strain DSM 44385 / JCM 11950 / CIP 105744 / CCUG 35717), this protein is Ribosome-binding factor A.